A 318-amino-acid chain; its full sequence is Thymidylate synthase (318 aa).

Residues Arg25 and 180–181 each bind dUMP; that span reads RR. Cys200 serves as the catalytic Nucleophile. DUMP-binding positions include 220–223, Asn231, and 261–263; these read RSGD and HIY. Asp223 lines the (6R)-5,10-methylene-5,6,7,8-tetrahydrofolate pocket. Position 317 (Ala317) interacts with (6R)-5,10-methylene-5,6,7,8-tetrahydrofolate.

The protein belongs to the thymidylate synthase family. Bacterial-type ThyA subfamily. Homodimer.

Its subcellular location is the cytoplasm. The catalysed reaction is dUMP + (6R)-5,10-methylene-5,6,7,8-tetrahydrofolate = 7,8-dihydrofolate + dTMP. The protein operates within pyrimidine metabolism; dTTP biosynthesis. Functionally, catalyzes the reductive methylation of 2'-deoxyuridine-5'-monophosphate (dUMP) to 2'-deoxythymidine-5'-monophosphate (dTMP) while utilizing 5,10-methylenetetrahydrofolate (mTHF) as the methyl donor and reductant in the reaction, yielding dihydrofolate (DHF) as a by-product. This enzymatic reaction provides an intracellular de novo source of dTMP, an essential precursor for DNA biosynthesis. The protein is Thymidylate synthase of Lactobacillus acidophilus (strain ATCC 700396 / NCK56 / N2 / NCFM).